Here is a 195-residue protein sequence, read N- to C-terminus: Ferredoxin-2, mitochondrial (195 aa).

The N-terminal 61 residues, 1–61, are a transit peptide targeting the mitochondrion; sequence MAAAAAVRAG…RRLRTSIGVC (61 aa). Residues 81-182 form the 2Fe-2S ferredoxin-type domain; the sequence is NVVYIDRSGR…GMELTLPKVT (102 aa). [2Fe-2S] cluster-binding residues include cysteine 117, cysteine 123, cysteine 126, and cysteine 163.

Belongs to the adrenodoxin/putidaredoxin family. In terms of assembly, component of the mitochondrial core iron-sulfur cluster (ISC) complex composed of NFS1, LYRM4, NDUFAB1, ISCU, FXN, and FDX2; this complex is a heterohexamer containing two copies of each monomer. Form a heterodimer complex with NFS1. It depends on [2Fe-2S] cluster as a cofactor.

The protein localises to the mitochondrion. It is found in the mitochondrion matrix. Electron donor, of the core iron-sulfur cluster (ISC) assembly complex, that acts to reduce the persulfide into sulfide during [2Fe-2S] clusters assembly on the scaffolding protein ISCU. The core iron-sulfur cluster (ISC) assembly complex is involved in the de novo synthesis of a [2Fe-2S] cluster, the first step of the mitochondrial iron-sulfur protein biogenesis. This process is initiated by the cysteine desulfurase complex (NFS1:LYRM4:NDUFAB1) that produces persulfide which is delivered on the scaffold protein ISCU in a FXN-dependent manner. Then this complex is stabilized by FDX2 which provides reducing equivalents to accomplish the [2Fe-2S] cluster assembly. Finally, the [2Fe-2S] cluster is transferred from ISCU to chaperone proteins, including HSCB, HSPA9 and GLRX5. Essential for coenzyme Q biosynthesis: together with FDXR, transfers the electrons required for the hydroxylation reaction performed by COQ6. The chain is Ferredoxin-2, mitochondrial from Danio rerio (Zebrafish).